Reading from the N-terminus, the 433-residue chain is MALDLRTIFQCEPSENNLGSENSEFRQSQGPAVQREEGISEFSRMVLNSFQDSNNSYARQELQRLYRIFHSWLQPEKHSKDEIISLLVLEQFMIGGHCNDKASVKEKWKSSGKNLERFMEDLTDDSINPPALVHVHMQGQEALFSEDMPLKDVIVHLTKQVSAQTPREANMGTPSQTSQDTSLETGEGCEDEQDGCNSSLKTTQVNENITNQGNQIVSLIIIQEENGPRSEEGGVSSDNPNNSKRAELVTARSQEGSINGITFQGVPMEMGAGCISQPEQSSPESALTHQSNEGNSTCEVHQKGSHGVRKSYKCEECPKVFKYLCHLLAHQRRHRNERPFVCPECQKGFFQISDLRVHQIIHTGKKPFTCSMCEKSFSHKTNLRSHERIHTGEKPYTCPFCKTSYRQSSTYHRHMRTHEKITPPSVPSTPEAS.

Positions 44-126 constitute an SCAN box domain; sequence RMVLNSFQDS…RFMEDLTDDS (83 aa). 2 stretches are compositionally biased toward polar residues: residues 162-184 and 277-298; these read SAQTPREANMGTPSQTSQDTSLE and QPEQSSPESALTHQSNEGNSTC. Disordered regions lie at residues 162–199 and 272–298; these read SAQTPREANMGTPSQTSQDTSLETGEGCEDEQDGCNSS and AGCISQPEQSSPESALTHQSNEGNSTC. 4 consecutive C2H2-type zinc fingers follow at residues 312–334, 340–362, 368–390, and 396–418; these read YKCEECPKVFKYLCHLLAHQRRH, FVCPECQKGFFQISDLRVHQIIH, FTCSMCEKSFSHKTNLRSHERIH, and YTCPFCKTSYRQSSTYHRHMRTH. The tract at residues 414–433 is disordered; the sequence is HMRTHEKITPPSVPSTPEAS.

It is found in the nucleus. The protein localises to the chromosome. It localises to the telomere. Its function is as follows. Embryonic stem (ES) cell-specific transcription factor required to regulate ES cell pluripotency. Binds telomeres and plays a key role in genomic stability in ES cells by regulating telomere elongation. Acts as an activator of spontaneous telomere sister chromatid exchange (T-SCE) and telomere elongation in undifferentiated ES cells. The chain is Zinc finger and SCAN domain-containing protein 4 (ZSCAN4) from Pongo pygmaeus (Bornean orangutan).